A 690-amino-acid chain; its full sequence is Glycine--tRNA ligase beta subunit (690 aa).

The protein belongs to the class-II aminoacyl-tRNA synthetase family. As to quaternary structure, tetramer of two alpha and two beta subunits.

The protein localises to the cytoplasm. The enzyme catalyses tRNA(Gly) + glycine + ATP = glycyl-tRNA(Gly) + AMP + diphosphate. In Buchnera aphidicola subsp. Acyrthosiphon pisum (strain Tuc7), this protein is Glycine--tRNA ligase beta subunit.